A 233-amino-acid polypeptide reads, in one-letter code: Small ribosomal subunit protein uS3 (233 aa).

Residues 39–107 (VRQFLASELT…PSQINIAEVR (69 aa)) enclose the KH type-2 domain.

This sequence belongs to the universal ribosomal protein uS3 family. Part of the 30S ribosomal subunit. Forms a tight complex with proteins S10 and S14.

Its function is as follows. Binds the lower part of the 30S subunit head. Binds mRNA in the 70S ribosome, positioning it for translation. This chain is Small ribosomal subunit protein uS3, found in Baumannia cicadellinicola subsp. Homalodisca coagulata.